A 416-amino-acid polypeptide reads, in one-letter code: Vacuole membrane protein KMS2 (416 aa).

Gly2 is subject to N-acetylglycine. Topologically, residues 2 to 59 (GYGNRASSKTPAISGLREKHQQDLEKLTLTSQPFKTLRLFVVAVFLYVRRWSSYLLAN) are cytoplasmic. A helical transmembrane segment spans residues 60-80 (VGWLILFCSIFVAFAALLVTL). Residues 81–100 (DGPHVKHVEELSEYTRFGLW) are Lumenal-facing. The helical transmembrane segment at 101–123 (WIFLGVASSIGLGSGLHTFVLYL) threads the bilayer. The Cytoplasmic portion of the chain corresponds to 124–249 (GPHIALFTIK…WLLSHSQYLN (126 aa)). The helical transmembrane segment at 250 to 270 (FFTILILASVPNPLFDLAGIM) threads the bilayer. Over 271–281 (CGQFEKPFWEF) the chain is Lumenal. The helical transmembrane segment at 282–304 (FLATLIGKAIIKTHIQTVFIICV) threads the bilayer. The Cytoplasmic segment spans residues 305-315 (CNNQLLDWVEN). A helical membrane pass occupies residues 316–336 (ELIYILSFVPGFASALPELTA). Over 337 to 364 (KLRLMKEKYLIASPPVSSDINVKKWDLS) the chain is Lumenal. The chain crosses the membrane as a helical span at residues 365–385 (FASVWNGVVWLMLLNFFGQIV). Residues 386 to 416 (TSTAQRYLKKQQEEELDALTNKSSLTSKKSK) are Cytoplasmic-facing.

This sequence belongs to the VMP1 family.

It is found in the endoplasmic reticulum membrane. Its function is as follows. Involved in the early secretory pathway. Required for the correct export of secretory products from the endoplasmic reticulum (ER) and involved in the maintenance of ER integrity. This Arabidopsis thaliana (Mouse-ear cress) protein is Vacuole membrane protein KMS2.